The following is a 399-amino-acid chain: Alpha-tubulin N-acetyltransferase (399 aa).

The 178-residue stretch at 1–178 folds into the N-acetyltransferase domain; sequence MEFNFIINKL…NNFVVFDQYF (178 aa). Acetyl-CoA is bound by residues 112–125 and 148–157; these read FYVH…GYGK and SPKLIAFLKK. Residues 183 to 193 are compositionally biased toward polar residues; it reads SSQNKQNQNTR. The segment at 183 to 223 is disordered; that stretch reads SSQNKQNQNTRSYSQPYSDYSSQIPTNYPQQQQQQSNSKSY. Over residues 194 to 223 the composition is skewed to low complexity; that stretch reads SYSQPYSDYSSQIPTNYPQQQQQQSNSKSY.

It belongs to the acetyltransferase ATAT1 family.

The catalysed reaction is L-lysyl-[alpha-tubulin] + acetyl-CoA = N(6)-acetyl-L-lysyl-[alpha-tubulin] + CoA + H(+). Its function is as follows. Specifically acetylates 'Lys-40' in alpha-tubulin on the lumenal side of microtubules. Promotes microtubule destabilization and accelerates microtubule dynamics; this activity may be independent of acetylation activity. Acetylates alpha-tubulin with a slow enzymatic rate, due to a catalytic site that is not optimized for acetyl transfer. Enters the microtubule through each end and diffuses quickly throughout the lumen of microtubules. Acetylates only long/old microtubules because of its slow acetylation rate since it does not have time to act on dynamically unstable microtubules before the enzyme is released. This is Alpha-tubulin N-acetyltransferase from Tetrahymena thermophila (strain SB210).